Reading from the N-terminus, the 280-residue chain is Cytochrome c1 (280 aa).

Residues 1-21 (MKKLLISAVSALVLGSGAALA) form the signal peptide. Residues Cys55, Cys58, His59, and Met205 each contribute to the heme c site. The helical transmembrane segment at 249–267 (MGLVAVVMLGLLSVMLYLT) threads the bilayer.

The main subunits of complex b-c1 are: cytochrome b, cytochrome c1 and the Rieske protein. Binds 1 heme c group covalently per subunit.

The protein resides in the cell membrane. In terms of biological role, component of the ubiquinol-cytochrome c reductase complex (complex III or cytochrome b-c1 complex), which is a respiratory chain that generates an electrochemical potential coupled to ATP synthesis. c1 functions as an electron donor to cytochrome c. In Rhodobacter capsulatus (Rhodopseudomonas capsulata), this protein is Cytochrome c1 (petC).